The following is a 1492-amino-acid chain: DNA polymerase alpha catalytic subunit (1492 aa).

Disordered stretches follow at residues 34–112 (DFIV…VEQS), 162–195 (SVTLESREEQERRRQSEQLKQQANIGQNQSDVNP), and 210–234 (ANSYQSKQNSHSVSKSKPGDHEMAN). Over residues 42-55 (YGYRDHGGEIWDRD) the composition is skewed to basic and acidic residues. A compositionally biased stretch (polar residues) spans 93 to 105 (NAASTNPSAQQKP). The span at 166-178 (ESREEQERRRQSE) shows a compositional bias: basic and acidic residues. 2 stretches are compositionally biased toward polar residues: residues 184-194 (ANIGQNQSDVN) and 210-224 (ANSYQSKQNSHSVSK). Zn(2+)-binding residues include C1314, C1317, C1341, C1344, C1375, C1380, C1393, and C1398. The segment at 1314–1344 (CPHCAHNYHFPGILVPSSNNTELTGLACVKC) adopts a CysA-type zinc-finger fold. Residues 1375–1398 (CKEPQCGMKTNQLLLNNKCIVKGC) carry the CysB motif motif.

This sequence belongs to the DNA polymerase type-B family.

Its subcellular location is the nucleus. The catalysed reaction is DNA(n) + a 2'-deoxyribonucleoside 5'-triphosphate = DNA(n+1) + diphosphate. Polymerase alpha in a complex with DNA primase is a replicative polymerase. This Sterkiella nova (Ciliate) protein is DNA polymerase alpha catalytic subunit.